Consider the following 118-residue polypeptide: Basic phospholipase A2 homolog 1 (118 aa).

7 disulfides stabilise this stretch: cysteine 11–cysteine 71, cysteine 27–cysteine 117, cysteine 29–cysteine 45, cysteine 44–cysteine 98, cysteine 51–cysteine 91, cysteine 60–cysteine 84, and cysteine 78–cysteine 89. The interval 106 to 118 is important for membrane-damaging activities in eukaryotes and bacteria; heparin-binding; that stretch reads NKNFNIDTKKRCK.

It belongs to the phospholipase A2 family. Group I subfamily. D49 sub-subfamily. As to expression, expressed by the venom gland.

It localises to the secreted. This chain is Basic phospholipase A2 homolog 1, found in Laticauda colubrina (Yellow-lipped sea krait).